The sequence spans 582 residues: Myoneurin (582 aa).

Residues 24–89 enclose the BTB domain; that stretch reads CDCTIVIGEF…IYTGTLNLDS (66 aa). Positions 169 to 197 are disordered; sequence QGALAKKSSQTKKKKKAFNSPKTGQNKTV. 2 consecutive short sequence motifs (nuclear localization signal) follow at residues 174 to 190 and 257 to 262; these read KKSSQTKKKKKAFNSPK and KRKRGK. Positions 188–197 are enriched in polar residues; that stretch reads SPKTGQNKTV. Position 289 is a phosphoserine (Ser289). A C2H2-type 1; degenerate zinc finger spans residues 302-324; sequence PMCNTRGKVFSEASSLRRHMRIH. C2H2-type zinc fingers lie at residues 330-352, 358-381, 387-409, 415-437, 443-465, and 471-494; these read YVCHLCGKAFTQCNQLKTHVRTH, YKCELCDKGFAQKCQLVFHSRMHH, YKCDVCNLQFATSSNLKIHARKH, YVCDRCGQRFAQASTLTYHVRRH, YVCDTCGKAFAVSSSLITHSRKH, and FICELCGNSYTDIKNLKKHKTKVH. Residues 489 to 538 are disordered; that stretch reads HKTKVHSGADKTPDSSAEDHTLSEQDSIQKSPLSETMDVKPSDTTLPLAL. The span at 495-511 shows a compositional bias: basic and acidic residues; the sequence is SGADKTPDSSAEDHTLS. A compositionally biased stretch (polar residues) spans 512-522; that stretch reads EQDSIQKSPLS.

The protein belongs to the krueppel C2H2-type zinc-finger protein family.

It is found in the nucleus. This is Myoneurin (MYNN) from Pongo abelii (Sumatran orangutan).